The sequence spans 317 residues: Probable transcription factor At5g61620 (317 aa).

A CCHC-type zinc finger spans residues 12–25 (CSHCGHNGHNARTC). The segment at 77-111 (DPIAAVDDTGYHSDGQIHSKKGKTAHEKKKGKPWT) is disordered. The segment covering 94-108 (HSKKGKTAHEKKKGK) has biased composition (basic residues). An HTH myb-type domain is found at 102 to 158 (HEKKKGKPWTEEEHRNFLIGLNKLGKGDWRGIAKSFVSTRTPTQVASHAQKYFIRLN). The segment at residues 130-154 (WRGIAKSFVSTRTPTQVASHAQKYF) is a DNA-binding region (H-T-H motif). Residues 173–206 (SLEDQKEKERNSQDASTKTPPKQPITGIQQPVVQ) form a disordered region. A compositionally biased stretch (basic and acidic residues) spans 175-184 (EDQKEKERNS). Over residues 185–206 (QDASTKTPPKQPITGIQQPVVQ) the composition is skewed to polar residues.

It localises to the nucleus. Probable transcription factor involved in somatic embryogenesis. Acts as a positive regulator of BHLH109. The sequence is that of Probable transcription factor At5g61620 from Arabidopsis thaliana (Mouse-ear cress).